Here is a 156-residue protein sequence, read N- to C-terminus: Small ribosomal subunit protein uS7 (156 aa).

This sequence belongs to the universal ribosomal protein uS7 family. Part of the 30S ribosomal subunit. Contacts proteins S9 and S11.

In terms of biological role, one of the primary rRNA binding proteins, it binds directly to 16S rRNA where it nucleates assembly of the head domain of the 30S subunit. Is located at the subunit interface close to the decoding center, probably blocks exit of the E-site tRNA. The protein is Small ribosomal subunit protein uS7 of Mannheimia succiniciproducens (strain KCTC 0769BP / MBEL55E).